Consider the following 405-residue polypeptide: MLISHPRIMIRHAPWVTSIETFCCSLATLFPKVFYTSVLTWSVYALIVHGCYDTLMTTQETSIFAIAIGLIGLTLYILCLYTYFKVLRAGPGSPSDFEELRIRNILSLSKPKYNSANPYDTNDNMATSASLLANAEGVDEIESIESEQPPSEYMTLHMLKSNNSSYRYCTKCSVWKPDRCHHCSTCNRCVLRMDHHCPWFAMCVGFYNHKFFAQFLMYLTAYSGFDFVVSLSILWKFFADEKYNDHYLSLNLVFLFVLSLAFFITVGGFSAFSLYLVFRNKTTIEFQENRWNFKNDKNGKSFQYEFDGSGKKKKLGNIFDLGCGRNWRSIMGPSWYYWLLPVTVTNKSIDARLENGINFEIDQDVYDRWCYNAQLQDQLNQQLADYKNRIRMEREANQTTDTNPF.

Residues 1–27 (MLISHPRIMIRHAPWVTSIETFCCSLA) lie on the Cytoplasmic side of the membrane. Residues 28 to 48 (TLFPKVFYTSVLTWSVYALIV) traverse the membrane as a helical segment. Residues 49-62 (HGCYDTLMTTQETS) are Lumenal-facing. A helical membrane pass occupies residues 63–83 (IFAIAIGLIGLTLYILCLYTY). Topologically, residues 84-214 (FKVLRAGPGS…GFYNHKFFAQ (131 aa)) are cytoplasmic. Positions 167 to 217 (RYCTKCSVWKPDRCHHCSTCNRCVLRMDHHCPWFAMCVGFYNHKFFAQFLM) constitute a DHHC domain. The helical transmembrane segment at 215–235 (FLMYLTAYSGFDFVVSLSILW) threads the bilayer. Over 236–251 (KFFADEKYNDHYLSLN) the chain is Lumenal. A helical membrane pass occupies residues 252-272 (LVFLFVLSLAFFITVGGFSAF). Residues 273–405 (SLYLVFRNKT…ANQTTDTNPF (133 aa)) are Cytoplasmic-facing.

Belongs to the DHHC palmitoyltransferase family. PFA3 subfamily. Post-translationally, autopalmitoylated.

The protein resides in the vacuole membrane. The enzyme catalyses L-cysteinyl-[protein] + hexadecanoyl-CoA = S-hexadecanoyl-L-cysteinyl-[protein] + CoA. Palmitoyltransferase specific for VAC8. Palmitoylates VAC8 at one or more of its N-terminal cysteine residues, which is required for its proper membrane localization. The sequence is that of Palmitoyltransferase PFA3 (PFA3) from Debaryomyces hansenii (strain ATCC 36239 / CBS 767 / BCRC 21394 / JCM 1990 / NBRC 0083 / IGC 2968) (Yeast).